The following is a 364-amino-acid chain: Ribosomal RNA large subunit methyltransferase F (364 aa).

The tract at residues 1–30 (MTNKRKSAKPLEPAKRAPKPRTKKSRDLSA) is disordered.

Belongs to the methyltransferase superfamily. METTL16/RlmF family.

It localises to the cytoplasm. The catalysed reaction is adenosine(1618) in 23S rRNA + S-adenosyl-L-methionine = N(6)-methyladenosine(1618) in 23S rRNA + S-adenosyl-L-homocysteine + H(+). Its function is as follows. Specifically methylates the adenine in position 1618 of 23S rRNA. This chain is Ribosomal RNA large subunit methyltransferase F, found in Vibrio vulnificus (strain CMCP6).